Here is a 478-residue protein sequence, read N- to C-terminus: MSATDPRPARTLFEKVWDAHVVRAETPETPAVLYIDLHLMHEVTSPQAFSMLRERGLKVRRPDRTLATTDHSTPTLPRLPDGRWPFFDAQNEAQVAQIEKNARDFGVELHGLGDPQQGVVHVFGPEMGATQPGMTVVCGDSHTATHGAFGALAFGIGTSEVGHVLATQCLLQRKPRSLAIRVDGALQPGVTAKDLILAIIAQIGVGGGTGHVMEFTGPAVRALTMEGRMTLCNMAIEGGARAGMIAPDDVTFQWLAGKPRVPQGAAFDAAVARWRELPTDAGARYDREVTVDVSRLEPMVTFGTNPAQGIPVTGRIPDPGAEKDPSARATLESALRYMALAPGKPILGQKVDVVFVGSCTNGRLEDLREAARVMRGRKVKTRTLVVAGSHAVKKAAEAEGLDRIFREAGAEWREPGCSMCLAMNGDMLEPGQYCVSTSNRNFEGRQGPGGRTLLASPATAAAAAVSGAVADPRRLVEG.

Residues C359, C417, and C420 each contribute to the [4Fe-4S] cluster site.

The protein belongs to the aconitase/IPM isomerase family. LeuC type 1 subfamily. Heterodimer of LeuC and LeuD. [4Fe-4S] cluster is required as a cofactor.

The catalysed reaction is (2R,3S)-3-isopropylmalate = (2S)-2-isopropylmalate. Its pathway is amino-acid biosynthesis; L-leucine biosynthesis; L-leucine from 3-methyl-2-oxobutanoate: step 2/4. In terms of biological role, catalyzes the isomerization between 2-isopropylmalate and 3-isopropylmalate, via the formation of 2-isopropylmaleate. The sequence is that of 3-isopropylmalate dehydratase large subunit from Anaeromyxobacter sp. (strain Fw109-5).